We begin with the raw amino-acid sequence, 297 residues long: HTH-type transcriptional regulator ArgP (297 aa).

Residues 4–60 (PDYRTLQALDAVIRERGFERAAQKLCITQSAVSQRIKQLENTFGQPLLVRTVPPRPT) enclose the HTH lysR-type domain. The segment at residues 21–40 (FERAAQKLCITQSAVSQRIK) is a DNA-binding region (H-T-H motif).

The protein belongs to the LysR transcriptional regulatory family. In terms of assembly, homodimer.

In terms of biological role, controls the transcription of genes involved in arginine and lysine metabolism. The sequence is that of HTH-type transcriptional regulator ArgP from Cronobacter sakazakii (strain ATCC BAA-894) (Enterobacter sakazakii).